The primary structure comprises 274 residues: 5'-3' exoribonuclease (274 aa).

9 residues coordinate Mn(2+): His-8, His-10, Asp-15, His-40, Glu-65, His-76, His-190, Asp-247, and His-249.

Belongs to the PHP family. TrpH/YciV subfamily. The cofactor is Mn(2+).

It catalyses the reaction a ribonucleoside 3',5'-bisphosphate + H2O = a ribonucleoside 5'-phosphate + phosphate. In terms of biological role, efficiently catalyzes the hydrolysis of the 3'-phosphate from 3',5'-bis-phosphonucleotides as well as the successive hydrolysis of 5'-phosphomononucleotides from the 5'-end of short pieces of RNA and DNA, with no specificity toward the identity of the nucleotide base. Is more efficient at hydrolyzing RNA oligonucleotides than DNA oligonucleotides. This enzyme can also hydrolyze annealed DNA duplexes, albeit at a catalytic efficiency lower than that of the corresponding single-stranded oligonucleotides. The sequence is that of 5'-3' exoribonuclease from Haemophilus influenzae (strain ATCC 51907 / DSM 11121 / KW20 / Rd).